A 432-amino-acid chain; its full sequence is Adenylosuccinate synthetase (432 aa).

Residues 13 to 19 and 41 to 43 contribute to the GTP site; these read GDEGKGK and GHT. The active-site Proton acceptor is the aspartate 14. 2 residues coordinate Mg(2+): aspartate 14 and glycine 41. IMP is bound by residues 14-17, 39-42, threonine 130, arginine 144, glutamine 225, threonine 240, and arginine 304; these read DEGK and NAGH. Histidine 42 serves as the catalytic Proton donor. Residue 300–306 participates in substrate binding; the sequence is AVTGRPR. GTP is bound by residues arginine 306, 332–334, and 415–417; these read KLD and STG.

The protein belongs to the adenylosuccinate synthetase family. Homodimer. The cofactor is Mg(2+).

It is found in the cytoplasm. It catalyses the reaction IMP + L-aspartate + GTP = N(6)-(1,2-dicarboxyethyl)-AMP + GDP + phosphate + 2 H(+). The protein operates within purine metabolism; AMP biosynthesis via de novo pathway; AMP from IMP: step 1/2. Its function is as follows. Plays an important role in the de novo pathway of purine nucleotide biosynthesis. Catalyzes the first committed step in the biosynthesis of AMP from IMP. In Actinobacillus pleuropneumoniae serotype 5b (strain L20), this protein is Adenylosuccinate synthetase.